A 335-amino-acid chain; its full sequence is Pregnancy-specific beta-1-glycoprotein 11 (335 aa).

Positions 1 to 34 (MGPLSAPPCTEHIKWKGLLLTALLLNFWNLPTTA) are cleaved as a signal peptide. The Ig-like V-type domain maps to 35–144 (QVMIEAQPPK…TGYFTFTLYL (110 aa)). Asparagine 61, asparagine 104, and asparagine 111 each carry an N-linked (GlcNAc...) asparagine glycan. The short motif at 127-129 (RGD) is the Cell attachment site element. Ig-like C2-type domains are found at residues 147 to 234 (PKPS…VTLN) and 242 to 317 (PRIF…TSLT). Disulfide bonds link cysteine 169–cysteine 217 and cysteine 261–cysteine 301.

This sequence belongs to the immunoglobulin superfamily. CEA family.

The protein resides in the secreted. The polypeptide is Pregnancy-specific beta-1-glycoprotein 11 (PSG11) (Homo sapiens (Human)).